The following is a 289-amino-acid chain: Mas-related G-protein coupled receptor member G (289 aa).

Over 1–13 (MFSIFNIWGTFNK) the chain is Extracellular. Residues 14-34 (VLFFLSLTVSLAGLVGNALLL) traverse the membrane as a helical segment. The Cytoplasmic segment spans residues 35–52 (WHLGLHIKKGPFNTYLLH). The chain crosses the membrane as a helical span at residues 53–73 (LAAADFLFLSCQVGFSIATIV). Over 74–78 (SGHED) the chain is Extracellular. The chain crosses the membrane as a helical span at residues 79 to 99 (TLYFPVTFLWFAVGLWLLAAF). Residues 100–120 (SVDCCLAYMFPSFCSPNRRPR) are Cytoplasmic-facing. Residues 121 to 141 (FTSVVLCLVIWALTMPAVLLP) traverse the membrane as a helical segment. The Extracellular portion of the chain corresponds to 142 to 164 (ANACGLLKNGMSLLVCLKYHWTS). A helical membrane pass occupies residues 165 to 185 (VTWLAVLSGMACGASKFLLIF). Topologically, residues 186 to 199 (GNCCSSQPPPKFCK) are cytoplasmic. Residues 200–220 (LAQCSGILLFFCRLPLVVYWC) form a helical membrane-spanning segment. The Extracellular segment spans residues 221-222 (LR). Residues 223–243 (PVLKFLLPFFFPLATLLACID) form a helical membrane-spanning segment. At 244–289 (SSAKPLLYYMKGRQLRKDPLQVALNRALGEESQSGLGGLSLPMHQV) the chain is on the cytoplasmic side.

The protein belongs to the G-protein coupled receptor 1 family. Mas subfamily.

It is found in the cell membrane. In terms of biological role, orphan receptor. May regulate nociceptor function and/or development, including the sensation or modulation of pain. This is Mas-related G-protein coupled receptor member G (Mrgprg) from Mus musculus (Mouse).